Consider the following 200-residue polypeptide: Molybdopterin synthase catalytic subunit (200 aa).

Over residues 16–30 the composition is skewed to polar residues; that stretch reads KLPSSHQSVEDSASE. Residues 16-43 are disordered; sequence KLPSSHQSVEDSASEPSGYEAKDPPQDT. The residue at position 20 (serine 20) is a Phosphoserine. Substrate contacts are provided by residues 154–155, lysine 170, and 177–179; these read HR and KKE.

This sequence belongs to the MoaE family. MOCS2B subfamily. Heterotetramer; composed of 2 small (MOCS2A) and 2 large (MOCS2B) subunits.

The protein resides in the cytoplasm. The protein localises to the cytosol. It carries out the reaction 2 [molybdopterin-synthase sulfur-carrier protein]-C-terminal-Gly-aminoethanethioate + cyclic pyranopterin phosphate + H2O = molybdopterin + 2 [molybdopterin-synthase sulfur-carrier protein]-C-terminal Gly-Gly + 2 H(+). It functions in the pathway cofactor biosynthesis; molybdopterin biosynthesis. Its function is as follows. Catalytic subunit of the molybdopterin synthase complex, a complex that catalyzes the conversion of precursor Z into molybdopterin. Acts by mediating the incorporation of 2 sulfur atoms from thiocarboxylated MOCS2A into precursor Z to generate a dithiolene group. The polypeptide is Molybdopterin synthase catalytic subunit (Rattus norvegicus (Rat)).